The sequence spans 1061 residues: Chimeric ERCC6-PGBD3 protein (1061 aa).

The interval 1 to 39 (MPNEGIPHSSQTQEQDCLQSQPVSNNEEMAIKQESGGDG) is disordered. The segment covering 8 to 27 (HSSQTQEQDCLQSQPVSNNE) has biased composition (polar residues). Residue Ser-158 is modified to Phosphoserine. Lys-255 participates in a covalent cross-link: Glycyl lysine isopeptide (Lys-Gly) (interchain with G-Cter in SUMO2). 4 disordered regions span residues 287-323 (KQGC…VLSK), 344-466 (GKVG…QRLS), 494-521 (VIQP…INNL), and 537-573 (SDAE…SRRR). Residues 353-363 (RPWESDMRPEA) are compositionally biased toward basic and acidic residues. The segment covering 364–392 (EGDSEGEESEYFPTEEEEEEEDDEVEGAE) has biased composition (acidic residues). 2 positions are modified to phosphoserine: Ser-429 and Ser-430. A compositionally biased stretch (basic and acidic residues) spans 451–462 (RYRDDGDEDYYK). Positions 506–515 (SDEESGDEEG) are enriched in acidic residues. Ser-554 is modified (phosphoserine).

Expressed in heart and oocytes, but not in granulosa cells (at protein level).

It localises to the nucleus. Functionally, involved in repair of DNA damage following UV irradiation, acting either in the absence of ERCC6 or synergistically with ERCC6. Involved in the regulation of gene expression. In the absence of ERCC6, induces the expression of genes characteristic of interferon-like antiviral responses. This response is almost completely suppressed in the presence of ERCC6. In the presence of ERCC6, regulates the expression of genes involved in metabolism regulation, including IGFBP5 and IGFBP7. In vitro binds to PGBD3-related transposable elements, called MER85s; these non-autonomous 140 bp elements are characterized by the presence of PGBD3 terminal inverted repeats and the absence of internal transposase ORF. In Homo sapiens (Human), this protein is Chimeric ERCC6-PGBD3 protein.